A 160-amino-acid polypeptide reads, in one-letter code: Transcription elongation factor GreA (160 aa).

The stretch at 53–73 forms a coiled coil; that stretch reads AREEQGMVEARIRDIEGRLQN.

Belongs to the GreA/GreB family.

Functionally, necessary for efficient RNA polymerase transcription elongation past template-encoded arresting sites. The arresting sites in DNA have the property of trapping a certain fraction of elongating RNA polymerases that pass through, resulting in locked ternary complexes. Cleavage of the nascent transcript by cleavage factors such as GreA or GreB allows the resumption of elongation from the new 3'terminus. GreA releases sequences of 2 to 3 nucleotides. This Pseudomonas putida (strain ATCC 47054 / DSM 6125 / CFBP 8728 / NCIMB 11950 / KT2440) protein is Transcription elongation factor GreA.